A 236-amino-acid polypeptide reads, in one-letter code: ATP synthase subunit a, chloroplastic (236 aa).

5 helical membrane-spanning segments follow: residues 25–45, 87–107, 123–143, 180–202, and 210–230; these read MHGQ…AFAV, FIGT…LIPW, DINT…YAGL, LFGN…PLVI, and GLFT…AYIG.

This sequence belongs to the ATPase A chain family. As to quaternary structure, F-type ATPases have 2 components, CF(1) - the catalytic core - and CF(0) - the membrane proton channel. CF(1) has five subunits: alpha(3), beta(3), gamma(1), delta(1), epsilon(1). CF(0) has four main subunits: a, b, b' and c.

The protein localises to the plastid. It is found in the chloroplast thylakoid membrane. Key component of the proton channel; it plays a direct role in the translocation of protons across the membrane. This chain is ATP synthase subunit a, chloroplastic, found in Ostreococcus tauri.